The sequence spans 385 residues: Protein pelota homolog (385 aa).

The protein belongs to the eukaryotic release factor 1 family. Pelota subfamily. Component of the Pelota-HBS1L complex, also named Dom34-Hbs1 complex, composed of PELO and HBS1L. It depends on a divalent metal cation as a cofactor.

Its subcellular location is the cytoplasm. Functionally, component of the Pelota-HBS1L complex, a complex that recognizes stalled ribosomes and triggers the No-Go Decay (NGD) pathway. In the Pelota-HBS1L complex, PELO recognizes ribosomes stalled at the 3' end of an mRNA and engages stalled ribosomes by destabilizing mRNA in the mRNA channel. Following mRNA extraction from stalled ribosomes by the SKI complex, the Pelota-HBS1L complex promotes recruitment of ABCE1, which drives the disassembly of stalled ribosomes, followed by degradation of damaged mRNAs as part of the NGD pathway. The polypeptide is Protein pelota homolog (pelo) (Danio rerio (Zebrafish)).